The following is a 371-amino-acid chain: Chorismate synthase (371 aa).

NADP(+) is bound by residues Arg-48 and Arg-54. FMN contacts are provided by residues 132 to 134 (RSS), 244 to 245 (NA), Gly-289, 304 to 308 (KPTSS), and Arg-330.

This sequence belongs to the chorismate synthase family. As to quaternary structure, homotetramer. It depends on FMNH2 as a cofactor.

It catalyses the reaction 5-O-(1-carboxyvinyl)-3-phosphoshikimate = chorismate + phosphate. The protein operates within metabolic intermediate biosynthesis; chorismate biosynthesis; chorismate from D-erythrose 4-phosphate and phosphoenolpyruvate: step 7/7. In terms of biological role, catalyzes the anti-1,4-elimination of the C-3 phosphate and the C-6 proR hydrogen from 5-enolpyruvylshikimate-3-phosphate (EPSP) to yield chorismate, which is the branch point compound that serves as the starting substrate for the three terminal pathways of aromatic amino acid biosynthesis. This reaction introduces a second double bond into the aromatic ring system. In Methylobacterium nodulans (strain LMG 21967 / CNCM I-2342 / ORS 2060), this protein is Chorismate synthase.